The chain runs to 313 residues: MRRGALLAGALAAYAAYLVLGALLVARLEGPHEARLRAELETLRAQLLQRSPCVAAPALDAFVERVLAAGRLGRVVLANASGSANASDPAWDFASALFFASTLITTVGYGYTTPLTDAGKAFSIAFALLGVPTTMLLLTASAQRLSLLLTHVPLSWLSMRWGWDPRRAACWHLVALLGVVVTVCFLVPAVIFAHLEEAWSFLDAFYFCFISLSTIGLGDYVPGEAPGQPYRALYKVLVTVYLFLGLVAMVLVLQTFRHVSDLHGLTELILLPPPCPASFNADEDDRVDILGPQPESHQQLSASSHTDYASIPR.

The Cytoplasmic portion of the chain corresponds to 1-4 (MRRG). Residues 5-25 (ALLAGALAAYAAYLVLGALLV) form a helical membrane-spanning segment. Residues N79 and N85 are each glycosylated (N-linked (GlcNAc...) asparagine). Positions 90-115 (AWDFASALFFASTLITTVGYGYTTPL) form an intramembrane region, pore-forming. Positions 106, 107, 108, and 109 each coordinate K(+). Residues 106–111 (TVGYGY) form a selectivity filter 1 region. Residues 121-141 (AFSIAFALLGVPTTMLLLTAS) form a helical membrane-spanning segment. Topologically, residues 142 to 172 (AQRLSLLLTHVPLSWLSMRWGWDPRRAACWH) are cytoplasmic. A helical transmembrane segment spans residues 173 to 193 (LVALLGVVVTVCFLVPAVIFA). An intramembrane region (pore-forming) is located at residues 199-223 (WSFLDAFYFCFISLSTIGLGDYVPG). T214, I215, and G216 together coordinate K(+). Residues 214–219 (TIGLGD) are selectivity filter 2. Residues 236–256 (VLVTVYLFLGLVAMVLVLQTF) traverse the membrane as a helical segment. Topologically, residues 257–313 (RHVSDLHGLTELILLPPPCPASFNADEDDRVDILGPQPESHQQLSASSHTDYASIPR) are cytoplasmic. The short motif at 282–290 (DEDDRVDIL) is the Lysosomal targeting signal element. The interval 288-313 (DILGPQPESHQQLSASSHTDYASIPR) is disordered. Positions 295-307 (ESHQQLSASSHTD) are enriched in polar residues. The Lysosomal targeting signal motif lies at 308 to 312 (YASIP).

The protein belongs to the two pore domain potassium channel (TC 1.A.1.8) family. As to quaternary structure, homodimer; disulfide-linked. N-glycosylation is necessary for targeting to lysosomes. In terms of tissue distribution, widespread expression, detected in all tissues tested except for skeletal muscle. Strongest expression in placenta, pancreas, heart, colon and spleen, lower levels detected in peripheral blood leukocytes, lung, liver, kidney and thymus. Lowest expression detected in brain.

It is found in the late endosome membrane. It localises to the lysosome membrane. It carries out the reaction K(+)(in) = K(+)(out). Functionally, k(+) channel that conducts outward rectifying currents at the membranes of the endolysosomal system. Active in lysosomes where it regulates lysosome numbers and size. In macrophages, enables K(+) efflux coupled to ATP-induced NLRP3 inflammasome activation upon bacterial infection. Cooperates with ATP-gated P2RX7 channels to activate NLRP3 inflammasome, with P2RX7 conducting Ca(2+) and Na(+) influx that sets the membrane potential for K(+) efflux. Its function is as follows. Does not display channel activity. The chain is Potassium channel subfamily K member 6 from Homo sapiens (Human).